A 205-amino-acid polypeptide reads, in one-letter code: Thymidine kinase (205 aa).

ATP-binding positions include 9–16 and 87–90; these read SAMNAGKS and DESQ. Glutamate 88 functions as the Proton acceptor in the catalytic mechanism. Zn(2+) contacts are provided by cysteine 145, cysteine 147, cysteine 182, and histidine 185.

Belongs to the thymidine kinase family. In terms of assembly, homotetramer.

The protein resides in the cytoplasm. It catalyses the reaction thymidine + ATP = dTMP + ADP + H(+). The sequence is that of Thymidine kinase from Salmonella choleraesuis (strain SC-B67).